The chain runs to 138 residues: MIFLKSVIKVIDNSGAQLAECIKVIRKGSPKSPAMVGDRIVCVIQKAKPLTQNITGTANTNRVKKGDICHAIVVRSKQRNMCRKDGSTVAFGDTACVLINKNTGEPLGTRIMANDGCVDRTLKDKGYNKICSLASRVI.

Belongs to the universal ribosomal protein uL14 family. Component of the mitochondrial large ribosomal subunit (mt-LSU). Mature yeast 74S mitochondrial ribosomes consist of a small (37S) and a large (54S) subunit. The 37S small subunit contains a 15S ribosomal RNA (15S mt-rRNA) and 34 different proteins. The 54S large subunit contains a 21S rRNA (21S mt-rRNA) and 46 different proteins.

The protein resides in the mitochondrion. In terms of biological role, component of the mitochondrial ribosome (mitoribosome), a dedicated translation machinery responsible for the synthesis of mitochondrial genome-encoded proteins, including at least some of the essential transmembrane subunits of the mitochondrial respiratory chain. The mitoribosomes are attached to the mitochondrial inner membrane and translation products are cotranslationally integrated into the membrane. The polypeptide is Large ribosomal subunit protein uL14m (MRPL38) (Saccharomyces cerevisiae (strain ATCC 204508 / S288c) (Baker's yeast)).